Reading from the N-terminus, the 22-residue chain is Cysteine proteinase (22 aa).

The interval 1-22 is disordered; the sequence is GADDSDWRKKGAVNVIXKDQGQ.

This sequence belongs to the peptidase C1 family.

This is Cysteine proteinase from Trichomonas vaginalis.